Here is a 152-residue protein sequence, read N- to C-terminus: SUZ RNA-binding domain-containing (152 aa).

A disordered region spans residues 28–152; it reads KISQRENNNT…DGSQGFRQGR (125 aa). An SUZ domain is found at 42–107; it reads RAPVVIQDDS…ARKRILGSAS (66 aa). Basic and acidic residues-rich tracts occupy residues 89-100 and 113-130; these read AQREAEYAEARK and EKPV…EEIR. In terms of domain architecture, SUZ-C spans 111–152; it reads EQEKPVAERPARINQVEEIRQQNNVIRQPLGPDGSQGFRQGR.

This sequence belongs to the SZRD1 family.

This Xenopus laevis (African clawed frog) protein is SUZ RNA-binding domain-containing (szrd1).